A 143-amino-acid polypeptide reads, in one-letter code: Holo-[acyl-carrier-protein] synthase (143 aa).

Asp-9 and Glu-63 together coordinate Mg(2+).

The protein belongs to the P-Pant transferase superfamily. AcpS family. It depends on Mg(2+) as a cofactor.

It localises to the cytoplasm. It catalyses the reaction apo-[ACP] + CoA = holo-[ACP] + adenosine 3',5'-bisphosphate + H(+). Functionally, transfers the 4'-phosphopantetheine moiety from coenzyme A to a Ser of acyl-carrier-protein. The chain is Holo-[acyl-carrier-protein] synthase from Burkholderia mallei (strain NCTC 10247).